The following is an 805-amino-acid chain: Pentatricopeptide repeat-containing protein At4g01570 (805 aa).

PPR repeat units lie at residues 91–125 (SATAYSQIFRTVCRTGLLGEVPDLLGSMKEDGVNL), 126–160 (DQTMAKILLDSLIRSGKFESALGVLDYMEELGDCL), 161–196 (NPSVYDSVLIALVKKHELRLALSILFKLLEASDNHS), 211–241 (GTVAVNELLVGLRRADMRSEFKRVFEKLKGM), 247–277 (DTWSYNICIHGFGCWGDLDAALSLFKEMKER), 288–322 (DICTYNSLIHVLCLFGKAKDALIVWDELKVSGHEP), 323–357 (DNSTYRILIQGCCKSYRMDDAMRIYGEMQYNGFVP), 358–392 (DTIVYNCLLDGTLKARKVTEACQLFEKMVQEGVRA), 393–427 (SCWTYNILIDGLFRNGRAEAGFTLFCDLKKKGQFV), 428–462 (DAITFSIVGLQLCREGKLEGAVKLVEEMETRGFSV), 463–497 (DLVTISSLLIGFHKQGRWDWKEKLMKHIREGNLVP), 593–627 (DVDMMNTFLSIYLSKGDLSLACKLFEIFNGMGVTD), 629–663 (TSYTYNSMMSSFVKKGYFQTARGVLDQMFENFCAA), 664–698 (DIATYNVIIQGLGKMGRADLASAVLDRLTKQGGYL), 699–733 (DIVMYNTLINALGKATRLDEATQLFDHMKSNGINP), and 734–768 (DVVSYNTMIEVNSKAGKLKEAYKYLKAMLDAGCLP).

This sequence belongs to the PPR family. P subfamily.

In Arabidopsis thaliana (Mouse-ear cress), this protein is Pentatricopeptide repeat-containing protein At4g01570.